Here is a 266-residue protein sequence, read N- to C-terminus: Glucosamine-6-phosphate deaminase (266 aa).

The active-site Proton acceptor; for enolization step is D72. D141 serves as the catalytic For ring-opening step. H143 serves as the catalytic Proton acceptor; for ring-opening step. E148 acts as the For ring-opening step in catalysis.

This sequence belongs to the glucosamine/galactosamine-6-phosphate isomerase family. NagB subfamily. In terms of assembly, homohexamer; trimer of disulfide-linked dimers.

It carries out the reaction alpha-D-glucosamine 6-phosphate + H2O = beta-D-fructose 6-phosphate + NH4(+). It participates in amino-sugar metabolism; N-acetylneuraminate degradation; D-fructose 6-phosphate from N-acetylneuraminate: step 5/5. Allosterically activated by N-acetylglucosamine 6-phosphate (GlcNAc6P). Functionally, catalyzes the reversible isomerization-deamination of glucosamine 6-phosphate (GlcN6P) to form fructose 6-phosphate (Fru6P) and ammonium ion. The sequence is that of Glucosamine-6-phosphate deaminase from Shigella flexneri serotype 5b (strain 8401).